The following is a 249-amino-acid chain: tRNA 2'-phosphotransferase 1 (249 aa).

The residue at position 1 (Met1) is an N-acetylmethionine. Disordered stretches follow at residues Met1–Gln25 and Lys220–Gln249.

Belongs to the KptA/TPT1 family.

It carries out the reaction 2'-phospho-[ligated tRNA] + NAD(+) = mature tRNA + ADP-alpha-D-ribose 1'',2''-cyclic phosphate + nicotinamide. Functionally, catalyzes the last step of tRNA splicing, the transfer of the splice junction 2'-phosphate from ligated tRNA to NAD to produce ADP-ribose 1''-2'' cyclic phosphate. This is tRNA 2'-phosphotransferase 1 (Trpt1) from Mus musculus (Mouse).